The following is a 374-amino-acid chain: P2Y purinoceptor 2 (374 aa).

The Extracellular segment spans residues 1-32 (MAAGLDSWNSTINGTWEGDELGYKCRFNEDFK). Residues N9 and N13 are each glycosylated (N-linked (GlcNAc...) asparagine). A helical transmembrane segment spans residues 33 to 59 (YVLLPVSYGVVCVLGLCLNVVALYIFL). The Cytoplasmic portion of the chain corresponds to 60 to 70 (CRLKTWNASTT). A helical transmembrane segment spans residues 71–93 (YMFHLAVSDSLYAASLPLLVYYY). At 94-110 (AQGDHWPFSTVLCKLVR) the chain is on the extracellular side. C106 and C183 are oxidised to a cystine. The chain crosses the membrane as a helical span at residues 111 to 129 (FLFYTNLYCSILFLTCISV). Residues 130–152 (HRCLGVLRPLHSLSWGHARYARR) lie on the Cytoplasmic side of the membrane. A helical transmembrane segment spans residues 153 to 172 (VAAVVWVLVLACQAPVLYFV). The Extracellular segment spans residues 173 to 194 (TTSVRGTRITCHDTSARELFSH). A helical transmembrane segment spans residues 195–220 (FVAYSSVMLGLLFAVPFSIILVCYVL). Residues 221-245 (MARRLLKPAYGTTGLPRAKRKSVRT) are Cytoplasmic-facing. Residues 246-268 (IALVLAVFALCFLPFHVTRTLYY) traverse the membrane as a helical segment. The Extracellular segment spans residues 269–286 (SFRSLDLSCHTLNAINMA). Residues 287–308 (YKITRPLASANSCLDPVLYFLA) traverse the membrane as a helical segment. Topologically, residues 309 to 374 (GQRLVRFARD…AGSETKDIRL (66 aa)) are cytoplasmic. The tract at residues 318 to 374 (DAKPATEPTPSPQARRKLGLHRPNRTDTVRKDLSISSDDSRRTESTPAGSETKDIRL) is disordered. Basic residues predominate over residues 331–340 (ARRKLGLHRP). Basic and acidic residues predominate over residues 341–361 (NRTDTVRKDLSISSDDSRRTE).

It belongs to the G-protein coupled receptor 1 family.

Its subcellular location is the cell membrane. Functionally, receptor for ATP and UTP coupled to G-proteins that activate a phosphatidylinositol-calcium second messenger system. The affinity range is UTP = ATP &gt; ATP-gamma-S &gt;&gt; 2-methylthio-ATP = ADP. This Rattus norvegicus (Rat) protein is P2Y purinoceptor 2 (P2ry2).